A 323-amino-acid chain; its full sequence is Fructose-1,6-bisphosphatase class 1 (323 aa).

4 residues coordinate Mg(2+): glutamate 88, aspartate 107, leucine 109, and aspartate 110. Residues 110–113 (DGSS) and asparagine 200 each bind substrate. Mg(2+) is bound at residue glutamate 272.

Belongs to the FBPase class 1 family. Homotetramer. It depends on Mg(2+) as a cofactor.

Its subcellular location is the cytoplasm. It carries out the reaction beta-D-fructose 1,6-bisphosphate + H2O = beta-D-fructose 6-phosphate + phosphate. Its pathway is carbohydrate biosynthesis; gluconeogenesis. This chain is Fructose-1,6-bisphosphatase class 1, found in Acinetobacter baylyi (strain ATCC 33305 / BD413 / ADP1).